The primary structure comprises 132 residues: MKAFSPVRSVRKSSLTEHSLGIARSKTPVDDPMSLLYNMNDCYSKLKELVPSIPQNKKVSKMEILQHVIDYILDLQLALDSHPSIVSLHHARVGGSTSRTPLTALNTDISILSLQAAELSAEFTDESKSLCP.

The 53-residue stretch at 23–75 (ARSKTPVDDPMSLLYNMNDCYSKLKELVPSIPQNKKVSKMEILQHVIDYILDL) folds into the bHLH domain. Residues 105 to 114 (LNTDISILSL) carry the Nuclear export signal motif.

In terms of assembly, heterodimer with other HLH proteins.

The protein resides in the cytoplasm. The protein localises to the nucleus. Transcriptional regulator (lacking a basic DNA binding domain) which negatively regulates the basic helix-loop-helix (bHLH) transcription factors by forming heterodimers and inhibiting their DNA binding and transcriptional activity. Inhibits the activity of both neurogenic (neurod1/neuroD) and myogenic (myod1/myoD) bHLH factors. May play a role in the regulation of the circadian clock. The polypeptide is DNA-binding protein inhibitor ID-2 (Xenopus tropicalis (Western clawed frog)).